The following is a 335-amino-acid chain: tRNA N6-adenosine threonylcarbamoyltransferase (335 aa).

A divalent metal cation-binding residues include histidine 109, histidine 113, and tyrosine 130. Residues 130-134 (YVSGG), aspartate 162, glycine 177, glutamate 181, and asparagine 266 each bind substrate. Aspartate 294 serves as a coordination point for a divalent metal cation.

The protein belongs to the KAE1 / TsaD family. In terms of assembly, component of the EKC/KEOPS complex composed of at least tp53rk, tprkb, osgep and lage3; the whole complex dimerizes. A divalent metal cation is required as a cofactor.

Its subcellular location is the cytoplasm. The protein localises to the nucleus. It catalyses the reaction L-threonylcarbamoyladenylate + adenosine(37) in tRNA = N(6)-L-threonylcarbamoyladenosine(37) in tRNA + AMP + H(+). Its function is as follows. Component of the EKC/KEOPS complex that is required for the formation of a threonylcarbamoyl group on adenosine at position 37 (t(6)A37) in tRNAs that read codons beginning with adenine. The complex is probably involved in the transfer of the threonylcarbamoyl moiety of threonylcarbamoyl-AMP (TC-AMP) to the N6 group of A37. Osgep likely plays a direct catalytic role in this reaction, but requires other protein(s) of the complex to fulfill this activity. The sequence is that of tRNA N6-adenosine threonylcarbamoyltransferase from Xenopus laevis (African clawed frog).